The sequence spans 321 residues: Urease accessory protein UreD (321 aa).

The protein belongs to the UreD family. UreD, UreF and UreG form a complex that acts as a GTP-hydrolysis-dependent molecular chaperone, activating the urease apoprotein by helping to assemble the nickel containing metallocenter of UreC. The UreE protein probably delivers the nickel.

Its subcellular location is the cytoplasm. Required for maturation of urease via the functional incorporation of the urease nickel metallocenter. This is Urease accessory protein UreD from Photorhabdus laumondii subsp. laumondii (strain DSM 15139 / CIP 105565 / TT01) (Photorhabdus luminescens subsp. laumondii).